Consider the following 206-residue polypeptide: Probable GTP-binding protein EngB (206 aa).

Residues 24–198 (QGREVAFAGR…HARLDEWLGL (175 aa)) form the EngB-type G domain. Residues 32–39 (GRSNVGKS), 59–63 (GRTQL), 77–80 (DLPG), 144–147 (TKAD), and 177–179 (FSA) contribute to the GTP site. Positions 39 and 61 each coordinate Mg(2+).

This sequence belongs to the TRAFAC class TrmE-Era-EngA-EngB-Septin-like GTPase superfamily. EngB GTPase family. The cofactor is Mg(2+).

Its function is as follows. Necessary for normal cell division and for the maintenance of normal septation. The sequence is that of Probable GTP-binding protein EngB from Alkalilimnicola ehrlichii (strain ATCC BAA-1101 / DSM 17681 / MLHE-1).